The sequence spans 467 residues: Glutamine synthetase (467 aa).

In terms of domain architecture, GS beta-grasp spans 14 to 98 (EEVEYVDIRF…VHCNVVEPDT (85 aa)). Residues 106–467 (PRGAAVKAEA…PVEYQMYYSC (362 aa)) form the GS catalytic domain. Residues glutamate 131 and glutamate 133 each coordinate Mg(2+). ATP is bound at residue aspartate 209. Mg(2+) is bound by residues glutamate 214 and glutamate 221. Residues 265-266 (NG) and glycine 266 contribute to the L-glutamate site. Histidine 270 serves as a coordination point for Mg(2+). Residues 272 to 274 (NMS) and serine 274 each bind ATP. Arginine 320, glutamate 326, and arginine 338 together coordinate L-glutamate. ATP-binding residues include arginine 338 and arginine 343. Residue glutamate 356 participates in Mg(2+) binding. Position 358 (arginine 358) interacts with L-glutamate. Residue tyrosine 396 is modified to O-AMP-tyrosine.

The protein belongs to the glutamine synthetase family. In terms of assembly, oligomer of 12 subunits arranged in the form of two hexameric ring. The cofactor is Mg(2+).

The protein localises to the cytoplasm. It catalyses the reaction L-glutamate + NH4(+) + ATP = L-glutamine + ADP + phosphate + H(+). With respect to regulation, the activity of this enzyme could be controlled by adenylation under conditions of abundant glutamine. Its function is as follows. Catalyzes the ATP-dependent biosynthesis of glutamine from glutamate and ammonia. The protein is Glutamine synthetase of Cereibacter sphaeroides (Rhodobacter sphaeroides).